The chain runs to 520 residues: MAGPERWGPLLLCLLQAAPGRPRLAPPQNVTLLSQNFSVYLTWLPGLGNPQDVTYFVAYQSSPTRRRWREVEECAGTKELLCSMMCLKKQDLYNKFKGRVRTVSPSSKSPWVESEYLDYLFEVEPAPPVLVLTQTEEILSANATYQLPPCMPPLDLKYEVAFWKEGAGNKTLFPVTPHGQPVQITLQPAASEHHCLSARTIYTFSVPKYSKFSKPTCFLLEVPEANWAFLVLPSLLILLLVIAAGGVIWKTLMGNPWFQRAKMPRALDFSGHTHPVATFQPSRPESVNDLFLCPQKELTRGVRPTPRVRAPATQQTRWKKDLAEDEEEEDEEDTEDGVSFQPYIEPPSFLGQEHQAPGHSEAGGVDSGRPRAPLVPSEGSSAWDSSDRSWASTVDSSWDRAGSSGYLAEKGPGQGPGGDGHQESLPPPEFSKDSGFLEELPEDNLSSWATWGTLPPEPNLVPGGPPVSLQTLTFCWESSPEEEEEARESEIEDSDAGSWGAESTQRTEDRGRTLGHYMAR.

A signal peptide spans 1-20 (MAGPERWGPLLLCLLQAAPG). Residues 21 to 228 (RPRLAPPQNV…LLEVPEANWA (208 aa)) lie on the Extracellular side of the membrane. One can recognise a Fibronectin type-III domain in the interval 26–126 (PPQNVTLLSQ…LDYLFEVEPA (101 aa)). Residues Asn29 and Asn36 are each glycosylated (N-linked (GlcNAc...) asparagine). 2 disulfides stabilise this stretch: Cys74–Cys82 and Cys86–Cys150. N-linked (GlcNAc...) asparagine glycosylation is found at Asn142 and Asn169. An intrachain disulfide couples Cys195 to Cys217. The chain crosses the membrane as a helical span at residues 229 to 249 (FLVLPSLLILLLVIAAGGVIW). Over 250–520 (KTLMGNPWFQ…GRTLGHYMAR (271 aa)) the chain is Cytoplasmic. Disordered stretches follow at residues 302 to 439 (VRPT…FLEE) and 477 to 520 (ESSP…YMAR). Positions 323-336 (AEDEEEEDEEDTED) are enriched in acidic residues. Residues 380–392 (SSAWDSSDRSWAS) show a composition bias toward low complexity. Acidic residues predominate over residues 479–495 (SPEEEEEARESEIEDSD).

It belongs to the type II cytokine receptor family. Heterodimer with IL10RB. Post-translationally, ubiquitinated by FBXO45-containing E3 ligase leading to proteasomal degradation. In terms of tissue distribution, widely expressed.

The protein resides in the membrane. Its function is as follows. The IFNLR1/IL10RB dimer is a receptor for the cytokine ligands IFNL2 and IFNL3 and mediates their antiviral activity. The ligand/receptor complex stimulate the activation of the JAK/STAT signaling pathway leading to the expression of IFN-stimulated genes (ISG), which contribute to the antiviral state. Determines the cell type specificity of the lambda interferon action. Shows a more restricted pattern of expression in the epithelial tissues thereby limiting responses to lambda interferons primarily to epithelial cells of the respiratory, gastrointestinal, and reproductive tracts. Seems not to be essential for early virus-activated host defense in vaginal infection, but plays an important role in Toll-like receptor (TLR)-induced antiviral defense. Plays a significant role in the antiviral immune defense in the intestinal epithelium. This is Interferon lambda receptor 1 (IFNLR1) from Homo sapiens (Human).